A 769-amino-acid polypeptide reads, in one-letter code: Polyribonucleotide nucleotidyltransferase (769 aa).

Asp-490 and Asp-496 together coordinate Mg(2+). Positions 557 to 616 constitute a KH domain; it reads PKIDTIMIPVDKIKVVIGKGGEQIDKIIAETGVKIDIDDEGLCSIFSSDQSAIDRAKEII. In terms of domain architecture, S1 motif spans 626–694; the sequence is GEVYEAKVVR…DKGRVDASMR (69 aa). The span at 700-734 shows a compositional bias: basic and acidic residues; it reads PEGYVEPERKPRERRDNKDRRNGNGFDRRNNDRNN. Positions 700–769 are disordered; the sequence is PEGYVEPERK…FPELSTKKPE (70 aa). Positions 736–746 are enriched in low complexity; that stretch reads NNHNNNSGNHS. Residues 747-769 are compositionally biased toward basic and acidic residues; it reads FELRERKSHVDHEFPELSTKKPE.

The protein belongs to the polyribonucleotide nucleotidyltransferase family. Requires Mg(2+) as cofactor.

Its subcellular location is the cytoplasm. It carries out the reaction RNA(n+1) + phosphate = RNA(n) + a ribonucleoside 5'-diphosphate. Functionally, involved in mRNA degradation. Catalyzes the phosphorolysis of single-stranded polyribonucleotides processively in the 3'- to 5'-direction. This Lactococcus lactis subsp. cremoris (strain SK11) protein is Polyribonucleotide nucleotidyltransferase.